The primary structure comprises 299 residues: GTPase Era (299 aa).

The Era-type G domain maps to arginine 5–proline 175. The tract at residues glycine 13–serine 20 is G1. Glycine 13–serine 20 lines the GTP pocket. The G2 stretch occupies residues glutamine 39–histidine 43. A G3 region spans residues aspartate 60–glycine 63. GTP contacts are provided by residues aspartate 60–leucine 64 and threonine 124–aspartate 127. The tract at residues threonine 124–aspartate 127 is G4. The G5 stretch occupies residues valine 154–alanine 156. The 80-residue stretch at valine 206–lysine 285 folds into the KH type-2 domain.

This sequence belongs to the TRAFAC class TrmE-Era-EngA-EngB-Septin-like GTPase superfamily. Era GTPase family. As to quaternary structure, monomer.

The protein localises to the cell envelope. The protein resides in the secreted. It is found in the cell wall. Its function is as follows. Exhibits GTPase activity. Binds RNA but is probably not involved in ribosome assembly in mycobacteria. The chain is GTPase Era from Mycobacterium sp. (strain KMS).